The following is a 209-amino-acid chain: Uracil phosphoribosyltransferase (209 aa).

5-phospho-alpha-D-ribose 1-diphosphate contacts are provided by residues arginine 79, arginine 104, and 131–139; that span reads DPMLATGGS. Residues isoleucine 194 and 199-201 contribute to the uracil site; that span reads GDA. Aspartate 200 lines the 5-phospho-alpha-D-ribose 1-diphosphate pocket.

Belongs to the UPRTase family. Mg(2+) serves as cofactor.

The catalysed reaction is UMP + diphosphate = 5-phospho-alpha-D-ribose 1-diphosphate + uracil. The protein operates within pyrimidine metabolism; UMP biosynthesis via salvage pathway; UMP from uracil: step 1/1. Allosterically activated by GTP. Its function is as follows. Catalyzes the conversion of uracil and 5-phospho-alpha-D-ribose 1-diphosphate (PRPP) to UMP and diphosphate. The chain is Uracil phosphoribosyltransferase from Citrifermentans bemidjiense (strain ATCC BAA-1014 / DSM 16622 / JCM 12645 / Bem) (Geobacter bemidjiensis).